We begin with the raw amino-acid sequence, 230 residues long: LexA repressor (230 aa).

The disordered stretch occupies residues 1–21; the sequence is MSDDSSETRTGGRRGADAGLT. Positions 44 to 64 form a DNA-binding region, H-T-H motif; the sequence is IREIGDAVGLTSTSSVAHQLR. Catalysis depends on for autocatalytic cleavage activity residues Ser-154 and Lys-191.

It belongs to the peptidase S24 family. Homodimer.

The catalysed reaction is Hydrolysis of Ala-|-Gly bond in repressor LexA.. Represses a number of genes involved in the response to DNA damage (SOS response), including recA and lexA. In the presence of single-stranded DNA, RecA interacts with LexA causing an autocatalytic cleavage which disrupts the DNA-binding part of LexA, leading to derepression of the SOS regulon and eventually DNA repair. In Mycobacterium sp. (strain JLS), this protein is LexA repressor.